A 59-amino-acid polypeptide reads, in one-letter code: uncharacterized protein (59 aa).

This is an uncharacterized protein from Rickettsia conorii (strain ATCC VR-613 / Malish 7).